The chain runs to 336 residues: Eukaryotic translation initiation factor 3 subunit H (336 aa).

The MPN domain maps to 21–154 (VQCDGLAAMK…LKAYRLTPQA (134 aa)).

The protein belongs to the eIF-3 subunit H family. In terms of assembly, component of the eukaryotic translation initiation factor 3 (eIF-3) complex.

The protein localises to the cytoplasm. Its function is as follows. Component of the eukaryotic translation initiation factor 3 (eIF-3) complex, which is involved in protein synthesis of a specialized repertoire of mRNAs and, together with other initiation factors, stimulates binding of mRNA and methionyl-tRNAi to the 40S ribosome. The eIF-3 complex specifically targets and initiates translation of a subset of mRNAs involved in cell proliferation. In Aedes aegypti (Yellowfever mosquito), this protein is Eukaryotic translation initiation factor 3 subunit H.